The primary structure comprises 168 residues: 6,7-dimethyl-8-ribityllumazine synthase (168 aa).

5-amino-6-(D-ribitylamino)uracil contacts are provided by residues Trp31, 65–67 (SFE), and 90–92 (NVI). 95-96 (ET) provides a ligand contact to (2S)-2-hydroxy-3-oxobutyl phosphate. The Proton donor role is filled by His98. Phe123 is a binding site for 5-amino-6-(D-ribitylamino)uracil. Residue Arg137 coordinates (2S)-2-hydroxy-3-oxobutyl phosphate.

The protein belongs to the DMRL synthase family.

The catalysed reaction is (2S)-2-hydroxy-3-oxobutyl phosphate + 5-amino-6-(D-ribitylamino)uracil = 6,7-dimethyl-8-(1-D-ribityl)lumazine + phosphate + 2 H2O + H(+). The protein operates within cofactor biosynthesis; riboflavin biosynthesis; riboflavin from 2-hydroxy-3-oxobutyl phosphate and 5-amino-6-(D-ribitylamino)uracil: step 1/2. Catalyzes the formation of 6,7-dimethyl-8-ribityllumazine by condensation of 5-amino-6-(D-ribitylamino)uracil with 3,4-dihydroxy-2-butanone 4-phosphate. This is the penultimate step in the biosynthesis of riboflavin. The protein is 6,7-dimethyl-8-ribityllumazine synthase of Christiangramia forsetii (strain DSM 17595 / CGMCC 1.15422 / KT0803) (Gramella forsetii).